The chain runs to 147 residues: Chorion class B protein B.L1 (147 aa).

Positions 1–38 are left arm; that stretch reads IGCGRGCGGRGYGGLGYGGLGYGGLGYGGLGGGCGRGF. 4 repeat units span residues 11–15, 16–20, 21–25, and 26–30. The tract at residues 11-30 is 4 X 5 AA tandem repeats of G-Y-G-G-L; the sequence is GYGGLGYGGLGYGGLGYGGL. The interval 39-107 is central domain; the sequence is SGGGLPVATA…GNGAVGITRE (69 aa). Residues 108 to 147 form a right arm (Gly-rich tandem repeats) region; sequence GGLGYGAGYGGGYGLGYGGYGGGYGLGYGGYGGCGCGCGY.

The protein belongs to the chorion protein family.

This protein is one of many from the eggshell of the silk moth. This is Chorion class B protein B.L1 from Bombyx mori (Silk moth).